Reading from the N-terminus, the 237-residue chain is UPF0280 protein Mbur_0309 (237 aa).

The protein belongs to the UPF0280 family.

This chain is UPF0280 protein Mbur_0309, found in Methanococcoides burtonii (strain DSM 6242 / NBRC 107633 / OCM 468 / ACE-M).